A 466-amino-acid chain; its full sequence is Delta-1 crystallin (466 aa).

This sequence belongs to the lyase 1 family. Argininosuccinate lyase subfamily. In terms of assembly, homotetramer. Eye lens.

Its function is as follows. Delta crystallin, the principal crystallin in embryonic lens, is found only in birds and reptiles. The chain is Delta-1 crystallin (ASL1) from Meleagris gallopavo (Wild turkey).